Consider the following 253-residue polypeptide: (S)-2-haloacid dehalogenase (253 aa).

Asp-8 functions as the Nucleophile in the catalytic mechanism. An (S)-2-haloacid contacts are provided by residues 9–10 (AY), Arg-39, and 114–115 (SN). The important for catalytic activity stretch occupies residues 171-176 (SSNGFD).

This sequence belongs to the HAD-like hydrolase superfamily. S-2-haloalkanoic acid dehalogenase family. Homodimer.

The enzyme catalyses an (S)-2-haloacid + H2O = a (2R)-2-hydroxycarboxylate + a halide anion + H(+). The catalysed reaction is (S)-2-chloropropanoate + H2O = (R)-lactate + chloride + H(+). Catalyzes the hydrolytic dehalogenation of small (S)-2-haloalkanoic acids to yield the corresponding (R)-2-hydroxyalkanoic acids. Acts on acids of short chain lengths, C(2) to C(4), with inversion of configuration at C-2. Active with 2-halogenated carboxylic acids and converts only the S-isomer (or L-isomer) of 2-chloropropionic acid with inversion of configuration to produce R-lactate (or D-isomer). The sequence is that of (S)-2-haloacid dehalogenase from Xanthobacter autotrophicus.